The primary structure comprises 201 residues: Nucleoid occlusion factor SlmA (201 aa).

Positions 14–75 (KERQQQVLEV…ALIERIEMTL (62 aa)) constitute an HTH tetR-type domain. Positions 38–57 (TTERLSKAVGVSEGALYRYF) form a DNA-binding region, H-T-H motif.

This sequence belongs to the nucleoid occlusion factor SlmA family. In terms of assembly, homodimer. Interacts with FtsZ.

The protein localises to the cytoplasm. It localises to the nucleoid. Its function is as follows. Required for nucleoid occlusion (NO) phenomenon, which prevents Z-ring formation and cell division over the nucleoid. Acts as a DNA-associated cell division inhibitor that binds simultaneously chromosomal DNA and FtsZ, and disrupts the assembly of FtsZ polymers. SlmA-DNA-binding sequences (SBS) are dispersed on non-Ter regions of the chromosome, preventing FtsZ polymerization at these regions. The polypeptide is Nucleoid occlusion factor SlmA (Glaesserella parasuis serovar 5 (strain SH0165) (Haemophilus parasuis)).